The chain runs to 216 residues: Endoplasmic reticulum vesicle protein 25 (216 aa).

The first 25 residues, 1-25 (MGSSRLAMRSALGLFFLLFVQISLA), serve as a signal peptide directing secretion. Over 26–185 (LKFDIAAGKG…TNESTNERVK (160 aa)) the chain is Lumenal. The region spanning 36–126 (ERCIRNFVLK…HRSIELDVDI (91 aa)) is the GOLD domain. The chain crosses the membrane as a helical span at residues 186-206 (WFAFGTMGMLVGLGVWQVIYL). Residues 207–216 (RAYFRSKHLI) lie on the Cytoplasmic side of the membrane.

This sequence belongs to the EMP24/GP25L family.

The protein resides in the endoplasmic reticulum membrane. It is found in the golgi apparatus membrane. Functionally, constituent of COPII-coated endoplasmic reticulum-derived transport vesicles. Required for efficient transport of a subset of secretory proteins to the Golgi. Facilitates retrograde transport from the Golgi to the endoplasmic reticulum. The polypeptide is Endoplasmic reticulum vesicle protein 25 (erv25) (Emericella nidulans (strain FGSC A4 / ATCC 38163 / CBS 112.46 / NRRL 194 / M139) (Aspergillus nidulans)).